The primary structure comprises 396 residues: Putative protein IntB (396 aa).

Positions 71 to 151 constitute a Core-binding (CB) domain; it reads RTFKEVAIEW…RTTAIMRYAV (81 aa). The region spanning 174–367 is the Tyr recombinase domain; that stretch reads QHRPALELKR…EHLEERRLML (194 aa). Catalysis depends on residues Arg-213, Lys-252, His-316, Arg-319, and His-343. The active-site O-(3'-phospho-DNA)-tyrosine intermediate is Tyr-353.

It belongs to the 'phage' integrase family.

The polypeptide is Putative protein IntB (intB) (Escherichia coli (strain K12)).